The following is a 529-amino-acid chain: Zinc finger protein 572 (529 aa).

The tract at residues 1–125 (MEQEQKLLVS…TGPAGQQNPS (125 aa)) is disordered. A Glycyl lysine isopeptide (Lys-Gly) (interchain with G-Cter in SUMO2) cross-link involves residue Lys-6. Polar residues predominate over residues 22-42 (KNTITGDESKNNLKTVQFSNS). Residues 43 to 68 (KADKERASKWSRSDGPENYKDEDTKE) are compositionally biased toward basic and acidic residues. The segment covering 87-96 (NDSNLGSQRN) has biased composition (polar residues). 12 consecutive C2H2-type zinc fingers follow at residues 131 to 153 (YKCSECWKSFSNSSHLRIHQRTH), 159 to 181 (YRCSECGKCFSNSSHLIQHLRTH), 187 to 209 (YQCGECGKSFSNTSHLIIHERTH), 215 to 237 (YKCPECAKSLSSSSHLIQHHRSH), 243 to 265 (YECPLCGKCFSHSYVLVEHQRTH), 271 to 293 (YKCPDCGKSFSQSSSLIRHQRTH), 299 to 321 (YKCPECGKGFGCNSTLIKHQRIH), 327 to 349 (YQCIECGKNFSRSSNLVTHQKMH), 383 to 405 (YKCCECGKSFGLSSHLIRHQRTH), 411 to 433 (YRCSECWKTFSQSSTLVIHQRTH), 439 to 461 (YKCPDCGECFSQSFNLIRHRRTH), and 467 to 489 (YKCTDCEKCFSRSAYLSQHRKIH).

It belongs to the krueppel C2H2-type zinc-finger protein family.

It is found in the nucleus. May be involved in transcriptional regulation. This is Zinc finger protein 572 (ZNF572) from Bos taurus (Bovine).